The chain runs to 108 residues: Ig kappa chain V region 120 (108 aa).

Residues 1-23 (AFELTQTPSSVEAAVGGTVTIKC) form a framework-1 region. The interval 24–34 (QSSQSIGTYLA) is complementarity-determining-1. The interval 35 to 49 (WYZZKPGQPPKLLIY) is framework-2. Residues 50–56 (RASTLAS) form a complementarity-determining-2 region. The framework-3 stretch occupies residues 57-88 (GVSSRFKGSGSGTEFTLTISGVECADAATYYC). The tract at residues 89-97 (QGTYYZSAS) is complementarity-determining-3. The interval 98 to 107 (FGGGTEVVVK) is framework-4.

This is Ig kappa chain V region 120 from Oryctolagus cuniculus (Rabbit).